A 467-amino-acid polypeptide reads, in one-letter code: Cytochrome P450 monooxygenase azaI (467 aa).

The signal sequence occupies residues 1-28 (MESLAQLPGIFLPLAGCVLALSLSALLA). Residue C411 participates in heme binding.

This sequence belongs to the cytochrome P450 family. Heme serves as cofactor.

The protein operates within secondary metabolite biosynthesis. In terms of biological role, cytochrome P450 monooxygenase; part of the gene cluster that mediates the biosynthesis of azaphilones, a class of fungal metabolites characterized by a highly oxygenated pyrano-quinone bicyclic core and exhibiting a broad range of bioactivities. In the first step, the non-reducing polyketide synthase azaA forms the hexaketide precursor from successive condensations of five malonyl-CoA units, presumably with a simple acetyl-CoA starter unit. The reactive polyketide chain then undergoes a PT-mediated C2-C7 cyclization to afford the aromatic ring and is eventually released as an aldehyde through the R-domain. The putative ketoreductase azaE is proposed to catalyze the reduction of the terminal ketone resulting in the early culture product FK17-P2a. The monooxygenase azaH was demonstrated to be the only enzyme required to convert FK17-P2a to azanigerone E. AzaH first hydroxylates the benzaldehyde intermediate FK17-P2a at C4, which triggers the formation of the pyran-ring to afford azanigerone E. In parallel, the 2,4-dimethylhexanoyl chain is synthesized by the HR-PKS azaB and is proposed to be transferred to the C4-hydroxyl of azanigerone E by the acyltransferase azaD directly from the ACP domain of azaB. Alternatively, the 2,4-dimethyl-hexanoyl chain may be offloaded from the HR-PKS as a carboxylic acid and converted to an acyl-CoA by azaF. The resulting acyl-CoA molecule could then be taken up as a substrate by AzaD to form azanigerone B. To yield the carboxylic acid substituent in azanigerone A, the hydroxypropyl side chain of azanigerone B would need to undergo a C-C oxidative cleavage catalyzed by cytochrome P450 AzaI. AzaI is proposed to act on a vicinal diol that leads to a C-C bond scission either through an alkoxyradical intermediate or a peroxy complex. In the biosynthesis of azanigerone A, azanigerone B first undergoes hydroxylation at C10, possibly catalyzed by one of the two FAD-dependent monooxygenases encoded in the cluster, azaG or azaL, resulting in the vicinal diol azanigerone C. Oxidative cleavage of azanigerone C by azaI would yield the corresponding aldehyde derivative of azanigerone A. Finally, the dehydrogenase azaJ is proposed to convert the aldehyde functional group into the carboxylic acid, completing the conversion from azanigerone B to azanigerone A. Alternatively, the oxidation of aldehyde to carboxylic acid may be catalyzed by the same P450 enzyme azaI via consecutive oxidation or by endogenous alcohol dehydrogenase. This is Cytochrome P450 monooxygenase azaI from Aspergillus niger (strain ATCC 1015 / CBS 113.46 / FGSC A1144 / LSHB Ac4 / NCTC 3858a / NRRL 328 / USDA 3528.7).